We begin with the raw amino-acid sequence, 149 residues long: 3-dehydroquinate dehydratase (149 aa).

Tyr25 serves as the catalytic Proton acceptor. Positions 76, 82, and 89 each coordinate substrate. His102 serves as the catalytic Proton donor. Residues 103 to 104 (LS) and Arg113 each bind substrate.

It belongs to the type-II 3-dehydroquinase family. Homododecamer.

The catalysed reaction is 3-dehydroquinate = 3-dehydroshikimate + H2O. It participates in metabolic intermediate biosynthesis; chorismate biosynthesis; chorismate from D-erythrose 4-phosphate and phosphoenolpyruvate: step 3/7. Its function is as follows. Catalyzes a trans-dehydration via an enolate intermediate. The chain is 3-dehydroquinate dehydratase from Acaryochloris marina (strain MBIC 11017).